The primary structure comprises 92 residues: UPF0223 protein SMU_1141c (92 aa).

Belongs to the UPF0223 family.

This Streptococcus mutans serotype c (strain ATCC 700610 / UA159) protein is UPF0223 protein SMU_1141c.